The following is a 458-amino-acid chain: N-acetylgalactosamine kinase (458 aa).

The alpha-D-galactose site is built by Arg43, Glu49, His50, and Asp52. ATP-binding residues include Gly143, Ser145, and Ser146. Asp190 is a binding site for alpha-D-galactose. Asp190 acts as the Proton acceptor in catalysis. Asn233 and Lys234 together coordinate ATP.

This sequence belongs to the GHMP kinase family. GalK subfamily. As to quaternary structure, monomer.

It catalyses the reaction N-acetyl-alpha-D-galactosamine + ATP = N-acetyl-alpha-D-galactosamine 1-phosphate + ADP + H(+). Acts on GalNAc. Also acts as a galactokinase when galactose is present at high concentrations. The sequence is that of N-acetylgalactosamine kinase (Galk2) from Mus musculus (Mouse).